Consider the following 233-residue polypeptide: Pathogenesis-related thaumatin-like protein 3.2 (233 aa).

An N-terminal signal peptide occupies residues Met-1–Gly-22. Disulfide bonds link Cys-36/Cys-232, Cys-77/Cys-87, Cys-92/Cys-98, Cys-145/Cys-221, Cys-151/Cys-204, Cys-159/Cys-169, Cys-173/Cys-182, and Cys-183/Cys-191. The N-linked (GlcNAc...) asparagine glycan is linked to Asn-195.

The protein belongs to the thaumatin family. Strongly expressed in roots and in female and male strobili, and, to a lower extent, in cotyledons, leaves, stems and pollen grains.

Functionally, may be involved in disease resistance. The polypeptide is Pathogenesis-related thaumatin-like protein 3.2 (Cryptomeria japonica (Japanese cedar)).